A 359-amino-acid polypeptide reads, in one-letter code: UPF0496 protein At3g57100 (359 aa).

Residues 179–208 are a coiled coil; sequence HEELAKMVVKLEKTMKDIDKKLRRVRGRRA. The chain crosses the membrane as a helical span at residues 214–234; it reads LLAPVIAVIFLSKLVAGLVPI.

Belongs to the UPF0496 family.

It localises to the membrane. The polypeptide is UPF0496 protein At3g57100 (Arabidopsis thaliana (Mouse-ear cress)).